The sequence spans 344 residues: Fructose-1,6-bisphosphatase class 1 (344 aa).

Mg(2+) contacts are provided by Glu-107, Asp-129, Leu-131, and Asp-132. Substrate is bound by residues Asn-224, Tyr-252, and Lys-282. Glu-288 is a binding site for Mg(2+).

It belongs to the FBPase class 1 family. Homotetramer. Mg(2+) serves as cofactor.

It localises to the cytoplasm. It catalyses the reaction beta-D-fructose 1,6-bisphosphate + H2O = beta-D-fructose 6-phosphate + phosphate. Its pathway is carbohydrate biosynthesis; Calvin cycle. The chain is Fructose-1,6-bisphosphatase class 1 from Synechococcus sp. (strain ATCC 27144 / PCC 6301 / SAUG 1402/1) (Anacystis nidulans).